The primary structure comprises 361 residues: Histidinol-phosphate aminotransferase (361 aa).

At K220 the chain carries N6-(pyridoxal phosphate)lysine.

Belongs to the class-II pyridoxal-phosphate-dependent aminotransferase family. Histidinol-phosphate aminotransferase subfamily. Homodimer. It depends on pyridoxal 5'-phosphate as a cofactor.

It catalyses the reaction L-histidinol phosphate + 2-oxoglutarate = 3-(imidazol-4-yl)-2-oxopropyl phosphate + L-glutamate. The protein operates within amino-acid biosynthesis; L-histidine biosynthesis; L-histidine from 5-phospho-alpha-D-ribose 1-diphosphate: step 7/9. In Syntrophus aciditrophicus (strain SB), this protein is Histidinol-phosphate aminotransferase.